The primary structure comprises 447 residues: Teichoic acids export ATP-binding protein TagH (447 aa).

Residues 24 to 246 (DKLKTLFSVF…YRAFLHRYNH (223 aa)) enclose the ABC transporter domain. Residue 60–67 (GLNGSGKS) participates in ATP binding. The segment at 247–447 (FTEPQKESYQ…QVLKLKEVTE (201 aa)) is unknown. The interval 359–393 (NAVKTTKTKPASTKESRQQEEVQPSPTNVPENNNS) is disordered. Polar residues-rich tracts occupy residues 360-369 (AVKTTKTKPA) and 379-393 (EVQP…NNNS). In terms of domain architecture, LysM spans 398 to 442 (STYTVEVGDSVSLIAENHGLTIEQLQTLNPEIIEVPIYPGQVLKL).

This sequence belongs to the ABC transporter superfamily. Teichoic acids exporter (TC 3.A.1.104.1) family. As to quaternary structure, the complex is composed of two ATP-binding proteins (TagH) and two transmembrane proteins (TagG).

The protein localises to the cell membrane. It carries out the reaction ATP + H2O + teichoic acidSide 1 = ADP + phosphate + teichoic acidSide 2.. Part of the ABC transporter complex TagGH involved in teichoic acids export. Responsible for energy coupling to the transport system. The chain is Teichoic acids export ATP-binding protein TagH from Enterococcus faecalis (strain ATCC 700802 / V583).